Reading from the N-terminus, the 389-residue chain is cAMP-dependent protein kinase regulatory subunit (389 aa).

2 disordered regions span residues 1–57 and 87–110; these read MSEN…KFAG and SVSAESLNPNPTASSNESWTPPYH. The dimerization and phosphorylation stretch occupies residues 1–128; sequence MSENTFPGRL…RLKKSISGNF (128 aa). The span at 21-31 shows a compositional bias: polar residues; the sequence is AANTEKPSTSH. A compositionally biased stretch (basic and acidic residues) spans 34-43; it reads RVTERDEDKV. Residue Ser-87 is modified to Phosphoserine. Over residues 87–105 the composition is skewed to polar residues; sequence SVSAESLNPNPTASSNESW. 3',5'-cyclic AMP is bound by residues 129–258, Glu-207, Arg-216, 261–377, Glu-327, and Arg-336; these read LFNH…FLEE and LLST…GVEE.

It belongs to the cAMP-dependent kinase regulatory chain family. As to quaternary structure, tetramer, composed of 2 regulatory (R) and 2 catalytic (C) subunits. In the presence of cAMP it dissociates into 2 active monomeric C subunits and an R dimer.

In Blumeria graminis (Powdery mildew), this protein is cAMP-dependent protein kinase regulatory subunit (pkar).